Reading from the N-terminus, the 130-residue chain is Sirohydrochlorin cobaltochelatase (130 aa).

His12 acts as the Proton acceptor in catalysis. His12 is a Co(2+) binding site. His12 lines the Ni(2+) pocket. Substrate contacts are provided by residues Glu48 and 73 to 78 (LASGVH). His78 is a Co(2+) binding site. His78 serves as a coordination point for Ni(2+).

The protein belongs to the CbiX family. CbiXS subfamily. Homotetramer; dimer of dimers.

The catalysed reaction is Co-sirohydrochlorin + 2 H(+) = sirohydrochlorin + Co(2+). The enzyme catalyses Ni-sirohydrochlorin + 2 H(+) = sirohydrochlorin + Ni(2+). It participates in cofactor biosynthesis; adenosylcobalamin biosynthesis; cob(II)yrinate a,c-diamide from sirohydrochlorin (anaerobic route): step 1/10. Its function is as follows. Catalyzes the insertion of Co(2+) into sirohydrochlorin as part of the anaerobic pathway to cobalamin biosynthesis. Involved in the biosynthesis of the unique nickel-containing tetrapyrrole coenzyme F430, the prosthetic group of methyl-coenzyme M reductase (MCR), which plays a key role in methanogenesis and anaerobic methane oxidation. Catalyzes the insertion of Ni(2+) into sirohydrochlorin to yield Ni-sirohydrochlorin. The protein is Sirohydrochlorin cobaltochelatase of Methanosarcina barkeri (strain Fusaro / DSM 804).